Consider the following 106-residue polypeptide: Small ribosomal subunit protein uS10 (106 aa).

Belongs to the universal ribosomal protein uS10 family. Part of the 30S ribosomal subunit.

Involved in the binding of tRNA to the ribosomes. This is Small ribosomal subunit protein uS10 from Wolbachia sp. subsp. Drosophila simulans (strain wRi).